We begin with the raw amino-acid sequence, 155 residues long: DNA-directed RNA polymerases I, II, and III subunit RPABC2 (155 aa).

Over residues 1 to 19 (MSDYEEAFNDGNENFEDFD) the composition is skewed to acidic residues. The segment at 1–57 (MSDYEEAFNDGNENFEDFDVEHFSDEETYEEKPQFKDGETTDANGKTIVTGGNGPED) is disordered. Over residues 20–39 (VEHFSDEETYEEKPQFKDGE) the composition is skewed to basic and acidic residues. Serine 24 carries the phosphoserine modification. The interval 111–132 (LEGETDPLRIAMKELAEKKIPL) is leucine-zipper.

The protein belongs to the archaeal Rpo6/eukaryotic RPB6 RNA polymerase subunit family. In terms of assembly, component of the RNA polymerase I (Pol I), RNA polymerase II (Pol II) and RNA polymerase III (Pol III) complexes. Component of the RNA polymerase I (Pol I) complex consisting of 14 subunits: RPA135, RPA190, RPC40, RPA14, RPB5, RPO26, RPA43, RPB8, RPA12, RPB10, RPC19, RPC10, RPA49 and RPA34. The complex is composed of a horseshoe-shaped core containing ten subunits (RPA135, RPA190, RPB5, RPO26, RPB8, RPB10, RPC10, RPA12, RPC19 and RPC40) where RPA135 and RPA190 form the DNA-binding cleft. Outside of the core, RPA14 and RPA43 form the stalk that mediates interactions with transcription initiation factors and newly synthesized RNA. Component of the RNA polymerase II (Pol II) complex consisting of 12 subunits: RPO21, RPB2, RPB3, RPB4, RPB5, RPO26, RPB7, RPB8, RPB9, RPB10 and RPC10. Component of the RNA polymerase III (Pol III) complex consisting of 17 subunits.

Its subcellular location is the cytoplasm. The protein resides in the nucleus. Its function is as follows. DNA-dependent RNA polymerases catalyze the transcription of DNA into RNA using the four ribonucleoside triphosphates as substrates. Common component of RNA polymerases I, II and III which synthesize ribosomal RNA precursors, mRNA precursors and many functional non-coding RNAs, and small RNAs, such as 5S rRNA and tRNAs, respectively. Pol II is the central component of the basal RNA polymerase II transcription machinery. RNA polymerases are composed of mobile elements that move relative to each other. In Pol II, RPB6 is part of the clamp element and together with parts of RPB1 and RPB2 forms a pocket to which the RPB4-RPB7 subcomplex binds. This Saccharomyces cerevisiae (strain ATCC 204508 / S288c) (Baker's yeast) protein is DNA-directed RNA polymerases I, II, and III subunit RPABC2 (RPO26).